Reading from the N-terminus, the 210-residue chain is MILVFIGPPGSGKGTQASLLSEKFSIISVGKVLRTVMESNTAEADVVKKFIKSGKLVPSNITNKIVVNALKNIEQCKSIILDGYPRDIFQADFLQENLQMDFKVLFFDIDDAVVLRRLRGRISCTDCGTIYNKLYCMPKINGVCDICNSSSFQNRVDDDESIIKLRLESYKKETLPLLEFYKAQNKLTLIDANQSTENILKKIKKMSGIY.

Residue 10-15 participates in ATP binding; that stretch reads GSGKGT. An NMP region spans residues 28-57; that stretch reads SVGKVLRTVMESNTAEADVVKKFIKSGKLV. AMP-binding positions include Arg34, 55 to 57, 83 to 86, and Gln90; these read KLV and GYPR. Residues 120–158 are LID; that stretch reads GRISCTDCGTIYNKLYCMPKINGVCDICNSSSFQNRVDD. Arg121 contributes to the ATP binding site. Zn(2+) contacts are provided by Cys124 and Cys127. 130-131 is a binding site for ATP; that stretch reads IY. Residues Cys144 and Cys147 each contribute to the Zn(2+) site. Residues Arg155 and Arg166 each coordinate AMP. Gln194 contacts ATP.

The protein belongs to the adenylate kinase family. Monomer.

It localises to the cytoplasm. The catalysed reaction is AMP + ATP = 2 ADP. Its pathway is purine metabolism; AMP biosynthesis via salvage pathway; AMP from ADP: step 1/1. Catalyzes the reversible transfer of the terminal phosphate group between ATP and AMP. Plays an important role in cellular energy homeostasis and in adenine nucleotide metabolism. This is Adenylate kinase from Orientia tsutsugamushi (strain Boryong) (Rickettsia tsutsugamushi).